A 411-amino-acid chain; its full sequence is Adenylosuccinate synthetase (411 aa).

Residues 11–17 (GDEGKGK) and 39–41 (GHT) contribute to the GTP site. Residue Asp-12 is the Proton acceptor of the active site. The Mg(2+) site is built by Asp-12 and Gly-39. Residues 12 to 15 (DEGK), 37 to 40 (NAGH), Thr-121, Arg-135, Gln-215, Thr-230, and Arg-294 contribute to the IMP site. His-40 functions as the Proton donor in the catalytic mechanism. 290–296 (TTTKRPR) provides a ligand contact to substrate. GTP-binding positions include Arg-296, 322-324 (KLD), and 400-402 (STS).

Belongs to the adenylosuccinate synthetase family. As to quaternary structure, homodimer. The cofactor is Mg(2+).

It localises to the cytoplasm. It catalyses the reaction IMP + L-aspartate + GTP = N(6)-(1,2-dicarboxyethyl)-AMP + GDP + phosphate + 2 H(+). It functions in the pathway purine metabolism; AMP biosynthesis via de novo pathway; AMP from IMP: step 1/2. Functionally, plays an important role in the de novo pathway of purine nucleotide biosynthesis. Catalyzes the first committed step in the biosynthesis of AMP from IMP. The chain is Adenylosuccinate synthetase from Helicobacter pylori (strain HPAG1).